The following is a 318-amino-acid chain: Transaldolase (318 aa).

The active-site Schiff-base intermediate with substrate is Lys132.

Belongs to the transaldolase family. Type 1 subfamily. In terms of assembly, homodimer.

It localises to the cytoplasm. It catalyses the reaction D-sedoheptulose 7-phosphate + D-glyceraldehyde 3-phosphate = D-erythrose 4-phosphate + beta-D-fructose 6-phosphate. Its pathway is carbohydrate degradation; pentose phosphate pathway; D-glyceraldehyde 3-phosphate and beta-D-fructose 6-phosphate from D-ribose 5-phosphate and D-xylulose 5-phosphate (non-oxidative stage): step 2/3. Its function is as follows. Transaldolase is important for the balance of metabolites in the pentose-phosphate pathway. In Shewanella sp. (strain ANA-3), this protein is Transaldolase.